Here is a 320-residue protein sequence, read N- to C-terminus: GMP reductase (320 aa).

The Thioimidate intermediate role is filled by cysteine 174. Position 203–226 (203–226 (IIADGGLRVNGDIAKSIRFGATMC)) interacts with NADP(+).

This sequence belongs to the IMPDH/GMPR family. GuaC type 2 subfamily.

The enzyme catalyses IMP + NH4(+) + NADP(+) = GMP + NADPH + 2 H(+). In terms of biological role, catalyzes the irreversible NADPH-dependent deamination of GMP to IMP. It functions in the conversion of nucleobase, nucleoside and nucleotide derivatives of G to A nucleotides, and in maintaining the intracellular balance of A and G nucleotides. This Mesoplasma florum (strain ATCC 33453 / NBRC 100688 / NCTC 11704 / L1) (Acholeplasma florum) protein is GMP reductase.